A 443-amino-acid polypeptide reads, in one-letter code: Amino-acid acetyltransferase (443 aa).

Residues 296-434 form the N-acetyltransferase domain; the sequence is EQIRRATIND…KKLMYNYQRR (139 aa).

Belongs to the acetyltransferase family. ArgA subfamily. As to quaternary structure, homohexamer.

Its subcellular location is the cytoplasm. The catalysed reaction is L-glutamate + acetyl-CoA = N-acetyl-L-glutamate + CoA + H(+). The protein operates within amino-acid biosynthesis; L-arginine biosynthesis; N(2)-acetyl-L-ornithine from L-glutamate: step 1/4. This chain is Amino-acid acetyltransferase, found in Escherichia fergusonii (strain ATCC 35469 / DSM 13698 / CCUG 18766 / IAM 14443 / JCM 21226 / LMG 7866 / NBRC 102419 / NCTC 12128 / CDC 0568-73).